Reading from the N-terminus, the 411-residue chain is 2,3-bisphosphoglycerate-independent phosphoglycerate mutase (411 aa).

It belongs to the BPG-independent phosphoglycerate mutase family. A-PGAM subfamily.

It catalyses the reaction (2R)-2-phosphoglycerate = (2R)-3-phosphoglycerate. It functions in the pathway carbohydrate degradation; glycolysis; pyruvate from D-glyceraldehyde 3-phosphate: step 3/5. Its function is as follows. Catalyzes the interconversion of 2-phosphoglycerate and 3-phosphoglycerate. In Pyrobaculum neutrophilum (strain DSM 2338 / JCM 9278 / NBRC 100436 / V24Sta) (Thermoproteus neutrophilus), this protein is 2,3-bisphosphoglycerate-independent phosphoglycerate mutase.